The chain runs to 248 residues: Triosephosphate isomerase (248 aa).

Position 9–11 (Asn-9–Lys-11) interacts with substrate. His-94 acts as the Electrophile in catalysis. Glu-166 (proton acceptor) is an active-site residue. Substrate-binding positions include Gly-172, Ser-212, and Gly-233–Gly-234.

It belongs to the triosephosphate isomerase family. In terms of assembly, homodimer.

The protein resides in the cytoplasm. The catalysed reaction is D-glyceraldehyde 3-phosphate = dihydroxyacetone phosphate. Its pathway is carbohydrate biosynthesis; gluconeogenesis. It functions in the pathway carbohydrate degradation; glycolysis; D-glyceraldehyde 3-phosphate from glycerone phosphate: step 1/1. Functionally, involved in the gluconeogenesis. Catalyzes stereospecifically the conversion of dihydroxyacetone phosphate (DHAP) to D-glyceraldehyde-3-phosphate (G3P). The polypeptide is Triosephosphate isomerase (Caldanaerobacter subterraneus subsp. tengcongensis (strain DSM 15242 / JCM 11007 / NBRC 100824 / MB4) (Thermoanaerobacter tengcongensis)).